Reading from the N-terminus, the 614-residue chain is Jacalin-related lectin 14 (614 aa).

Jacalin-type lectin domains follow at residues 27-169, 172-314, 317-462, and 468-611; these read VQKM…YFSW, PRKM…YFTT, PTKS…YFSP, and AEKL…HVVP.

It belongs to the jacalin lectin family.

The protein is Jacalin-related lectin 14 (JAL14) of Arabidopsis thaliana (Mouse-ear cress).